The primary structure comprises 54 residues: Ovomucoid (54 aa).

Residues 4–54 (VDCSDYPKPACTVEYMPLCGSDNKTYGNKCNFCNAVVDSNGTLTLSHFGKC) enclose the Kazal-like domain. Disulfide bonds link C6–C36, C14–C33, and C22–C54. N43 is a glycosylation site (N-linked (GlcNAc...) asparagine).

It is found in the secreted. This Anser canagicus (Emperor goose) protein is Ovomucoid.